We begin with the raw amino-acid sequence, 108 residues long: MRAFVALFCTLVAFATVICDIQEHGHSYLTRNVTVENGACIFERNTLPDGETKALHDPCVIATCYAARREVNATLCRNFGVDPGCRFHWRNDGVYPQCCPTQVCDGTD.

The first 19 residues, Met1–Cys19, serve as a signal peptide directing secretion. 4 disulfide bridges follow: Cys40-Cys64, Cys59-Cys98, Cys76-Cys99, and Cys85-Cys104.

The protein belongs to the CirpT family. Expressed in salivary glands.

The protein resides in the secreted. In terms of biological role, complement inhibitor. Prevents complement-mediated activation of C5 by sterically preventing direct binding of C5 to its convertase (binding with domains MG4 and MG5). Binds C5 at a different binding site than the other tick complement inhibitors OmCI and RaCI3, and the drug eculizumab. Inhibits the complement in human, rat and guinea pig, and also shows a reduced inhibition in rabbit and pig. The polypeptide is Complement inhibitor CirpT4 (Amblyomma americanum (Lone star tick)).